The following is a 290-amino-acid chain: Glycine--tRNA ligase alpha subunit (290 aa).

Belongs to the class-II aminoacyl-tRNA synthetase family. In terms of assembly, tetramer of two alpha and two beta subunits.

It is found in the cytoplasm. It catalyses the reaction tRNA(Gly) + glycine + ATP = glycyl-tRNA(Gly) + AMP + diphosphate. This chain is Glycine--tRNA ligase alpha subunit, found in Prochlorococcus marinus (strain NATL2A).